We begin with the raw amino-acid sequence, 247 residues long: 14-3-3 protein gamma-1 (247 aa).

It belongs to the 14-3-3 family. In terms of assembly, homodimer, and heterodimer with other family members.

It is found in the cytoplasm. Adapter protein implicated in the regulation of a large spectrum of both general and specialized signaling pathways. Binds to a large number of partners, usually by recognition of a phosphoserine or phosphothreonine motif. Binding generally results in the modulation of the activity of the binding partner. In Danio rerio (Zebrafish), this protein is 14-3-3 protein gamma-1 (ywhag1).